We begin with the raw amino-acid sequence, 534 residues long: Serine/threonine-protein kinase Nek6 (534 aa).

Residues 4 to 257 (YEVVEQIGRG…AGELLRHPYL (254 aa)) enclose the Protein kinase domain. ATP contacts are provided by residues 10-18 (IGRGAYGSA) and lysine 33. Aspartate 129 (proton acceptor) is an active-site residue. Disordered stretches follow at residues 278–306 (KSNL…SSEA) and 425–449 (KAHT…SSPK).

Belongs to the protein kinase superfamily. NEK Ser/Thr protein kinase family. NIMA subfamily. Interacts with DIS1. In terms of processing, ubiquitinated by the E3 ligase DIS1. Ubiquitination of NEK6 leads to its degradation via the 26S proteasome-dependent pathway. As to expression, expressed in anthers, pistils and leaves.

Its subcellular location is the cytoplasm. It carries out the reaction L-seryl-[protein] + ATP = O-phospho-L-seryl-[protein] + ADP + H(+). The catalysed reaction is L-threonyl-[protein] + ATP = O-phospho-L-threonyl-[protein] + ADP + H(+). May be involved in plant development processes. This Oryza sativa subsp. japonica (Rice) protein is Serine/threonine-protein kinase Nek6.